Here is a 63-residue protein sequence, read N- to C-terminus: Large ribosomal subunit protein uL29 (63 aa).

Belongs to the universal ribosomal protein uL29 family.

The polypeptide is Large ribosomal subunit protein uL29 (Alteromonas mediterranea (strain DSM 17117 / CIP 110805 / LMG 28347 / Deep ecotype)).